The following is a 261-amino-acid chain: Small ribosomal subunit protein eS4 (261 aa).

In terms of domain architecture, S4 RNA-binding spans 42-104; it reads LPLVIFLRNR…TGEFFRLIYD (63 aa).

It belongs to the eukaryotic ribosomal protein eS4 family.

The polypeptide is Small ribosomal subunit protein eS4 (RpS4) (Carabus granulatus (Ground beetle)).